The primary structure comprises 420 residues: Probable pectate lyase C (420 aa).

The first 20 residues, 1–20 (MKLSAPLLVSLAAFSQAVTA), serve as a signal peptide directing secretion. Residues N49, N165, and N202 are each glycosylated (N-linked (GlcNAc...) asparagine). R205 is a catalytic residue. The 36-residue stretch at 262-297 (NANFHGYVDNNYYDPDKDGQLDGSELGVSSSNYGGM) folds into the EF-hand domain. The Ca(2+) site is built by D275, D277, D279, Q281, and E286. The tract at residues 357–395 (ATMGGPGTLNGGTPAKDTDGDGIPDEAEKQLGTDPNTND) is disordered. N-linked (GlcNAc...) asparagine glycosylation is present at N394.

It belongs to the polysaccharide lyase 1 family. It depends on Ca(2+) as a cofactor.

The protein resides in the secreted. It catalyses the reaction Eliminative cleavage of (1-&gt;4)-alpha-D-galacturonan to give oligosaccharides with 4-deoxy-alpha-D-galact-4-enuronosyl groups at their non-reducing ends.. In terms of biological role, pectinolytic enzyme consist of four classes of enzymes: pectin lyase, polygalacturonase, pectin methylesterase and rhamnogalacturonase. Among pectinolytic enzymes, pectin lyase is the most important in depolymerization of pectin, since it cleaves internal glycosidic bonds of highly methylated pectins. Favors pectate, the anion, over pectin, the methyl ester. The polypeptide is Probable pectate lyase C (plyC) (Neosartorya fischeri (strain ATCC 1020 / DSM 3700 / CBS 544.65 / FGSC A1164 / JCM 1740 / NRRL 181 / WB 181) (Aspergillus fischerianus)).